Here is a 213-residue protein sequence, read N- to C-terminus: MSNPSCIIIAITGASASGKSSIASTVHKELCNELGCQEIGIITEDSYYKDQSHLEMTERVKTNYDHPNSMDRDLLIQHLKNLKNGSAVDVPVYSYVEHTRTNETTHFTPKRIVILEGILLLTDERVRQLADISVFVDTPLDICFIRRLQRDMEERGRSLQSVIDQYRATVRPMFLQFIEPSKQYADIVIPRGGKNRIAINMLKAQILHLLNQK.

Glycine 13–serine 20 is an ATP binding site.

It belongs to the uridine kinase family.

The protein localises to the cytoplasm. It carries out the reaction uridine + ATP = UMP + ADP + H(+). It catalyses the reaction cytidine + ATP = CMP + ADP + H(+). It participates in pyrimidine metabolism; CTP biosynthesis via salvage pathway; CTP from cytidine: step 1/3. Its pathway is pyrimidine metabolism; UMP biosynthesis via salvage pathway; UMP from uridine: step 1/1. This is Uridine kinase from Haemophilus influenzae (strain PittGG).